The primary structure comprises 550 residues: Medium-chain acyl-CoA ligase Mig (550 aa).

The N-terminal stretch at 1 to 19 is a signal peptide; the sequence is MSDTTTAFTVPAVAKAVAA.

This sequence belongs to the ATP-dependent AMP-binding enzyme family.

It localises to the secreted. The protein resides in the cell wall. It catalyses the reaction a medium-chain fatty acid + ATP + CoA = a medium-chain fatty acyl-CoA + AMP + diphosphate. The catalysed reaction is hexanoate + ATP + CoA = hexanoyl-CoA + AMP + diphosphate. The enzyme catalyses heptanoate + ATP + CoA = heptanoyl-CoA + AMP + diphosphate. It carries out the reaction octanoate + ATP + CoA = octanoyl-CoA + AMP + diphosphate. It catalyses the reaction decanoate + ATP + CoA = decanoyl-CoA + AMP + diphosphate. The catalysed reaction is dodecanoate + ATP + CoA = dodecanoyl-CoA + AMP + diphosphate. The enzyme catalyses tetradecanoate + ATP + CoA = tetradecanoyl-CoA + AMP + diphosphate. It carries out the reaction (9Z)-octadecenoate + ATP + CoA = (9Z)-octadecenoyl-CoA + AMP + diphosphate. It catalyses the reaction (9Z,12Z,15Z)-octadecatrienoate + ATP + CoA = (9Z,12Z,15Z)-octadecatrienoyl-CoA + AMP + diphosphate. The catalysed reaction is (5Z,8Z,11Z,14Z)-eicosatetraenoate + ATP + CoA = (5Z,8Z,11Z,14Z)-eicosatetraenoyl-CoA + AMP + diphosphate. Its pathway is lipid metabolism; fatty acid metabolism. With respect to regulation, inhibited by 2-hydroxydodecanoic acid, a typical inhibitor of medium-chain acyl-CoA synthetases. Functionally, catalyzes the activation of medium-chain fatty acids as acyl-coenzyme A (acyl-CoA). Shows maximal activity with saturated fatty acids of medium-chain length between C6 and C12. Has lower activity with tridecanoic acid (C13), tetradecanoic acid (C14) and with unsaturated fatty acids like oleic acid (C18:1), linolenic acid (C18:3) and arachidonic acid (C20:4). Shows weak activity with some aromatic carbon acids. Involved in the metabolism of fatty acid during mycobacterial survival in macrophages. The chain is Medium-chain acyl-CoA ligase Mig from Mycobacterium avium.